The following is a 138-amino-acid chain: Large ribosomal subunit protein mL54 (138 aa).

A mitochondrion-targeting transit peptide spans methionine 1–tryptophan 16.

Belongs to the mitochondrion-specific ribosomal protein mL54 family. Component of the mitochondrial ribosome large subunit (39S) which comprises a 16S rRNA and about 50 distinct proteins.

The protein localises to the mitochondrion. This Bos taurus (Bovine) protein is Large ribosomal subunit protein mL54 (MRPL54).